The sequence spans 152 residues: MMIINVLLCLGIFCFLLYAFYDQFFMDCWKGKTLLKVHLKKQGQKDALIFSLLIGIIIYQTYTNLSSATLYLLTALILLSVYAAFIRAPMLLLKEKGFFFGNIYFQYADIHQVNLAENNILVIDMKNGKRLLVHLLTDQDREQVIQFFGGYK.

Helical transmembrane passes span 1 to 21 (MMIINVLLCLGIFCFLLYAFY), 45 to 65 (KDALIFSLLIGIIIYQTYTNL), and 66 to 86 (SSATLYLLTALILLSVYAAFI).

It belongs to the UPF0266 family.

Its subcellular location is the cell inner membrane. This chain is UPF0266 membrane protein PM0830, found in Pasteurella multocida (strain Pm70).